The chain runs to 247 residues: Probable chemoreceptor glutamine deamidase CheD (247 aa).

Residues 204–247 (KRPAAPQPARPRIELFGGRGTAPGAGSPSAGSPYAANLSRKQEA) form a disordered region. The segment covering 227 to 239 (GAGSPSAGSPYAA) has biased composition (low complexity).

Belongs to the CheD family.

It carries out the reaction L-glutaminyl-[protein] + H2O = L-glutamyl-[protein] + NH4(+). In terms of biological role, probably deamidates glutamine residues to glutamate on methyl-accepting chemotaxis receptors (MCPs), playing an important role in chemotaxis. The protein is Probable chemoreceptor glutamine deamidase CheD of Burkholderia orbicola (strain AU 1054).